A 240-amino-acid polypeptide reads, in one-letter code: Expansin-A20 (240 aa).

The N-terminal stretch at 1–21 (MGNILLQLLAVVALCIAPARS) is a signal peptide. One can recognise an Expansin-like EG45 domain in the interval 41 to 145 (GGACGYGNLY…QQVKCWRYGG (105 aa)). 2 N-linked (GlcNAc...) asparagine glycosylation sites follow: asparagine 107 and asparagine 207. Residues 155–234 (YFELVLVTNM…GWSFGQTFST (80 aa)) form the Expansin-like CBD domain.

Belongs to the expansin family. Expansin A subfamily.

The protein localises to the secreted. The protein resides in the cell wall. Its subcellular location is the membrane. May cause loosening and extension of plant cell walls by disrupting non-covalent bonding between cellulose microfibrils and matrix glucans. No enzymatic activity has been found. May be required for rapid internodal elongation in deepwater rice during submergence. This chain is Expansin-A20 (EXPA20), found in Oryza sativa subsp. japonica (Rice).